Reading from the N-terminus, the 251-residue chain is Triosephosphate isomerase 1 (251 aa).

9–11 (NWK) contacts substrate. The active-site Electrophile is the His95. Residue Glu167 is the Proton acceptor of the active site. Residues Gly173, Ser213, and 234–235 (GG) each bind substrate.

Belongs to the triosephosphate isomerase family. Homodimer.

It is found in the cytoplasm. It carries out the reaction D-glyceraldehyde 3-phosphate = dihydroxyacetone phosphate. It participates in carbohydrate biosynthesis; gluconeogenesis. Its pathway is carbohydrate degradation; glycolysis; D-glyceraldehyde 3-phosphate from glycerone phosphate: step 1/1. Its function is as follows. Involved in the gluconeogenesis. Catalyzes stereospecifically the conversion of dihydroxyacetone phosphate (DHAP) to D-glyceraldehyde-3-phosphate (G3P). The polypeptide is Triosephosphate isomerase 1 (Listeria monocytogenes serovar 1/2a (strain ATCC BAA-679 / EGD-e)).